The following is a 396-amino-acid chain: S-adenosylmethionine synthase 4 (396 aa).

E13 serves as a coordination point for Mg(2+). H19 provides a ligand contact to ATP. E47 serves as a coordination point for K(+). 2 residues coordinate L-methionine: E60 and Q103. Residues 171 to 173, 239 to 242, D250, 256 to 257, A273, K277, and K281 contribute to the ATP site; these read DGK, SGRF, and RK. L-methionine is bound at residue D250. Position 281 (K281) interacts with L-methionine.

It belongs to the AdoMet synthase family. As to quaternary structure, homotetramer. Requires Mn(2+) as cofactor. Mg(2+) is required as a cofactor. Co(2+) serves as cofactor. It depends on K(+) as a cofactor. Expressed in roots, stems and leaves (at protein level).

The protein resides in the cytoplasm. It catalyses the reaction L-methionine + ATP + H2O = S-adenosyl-L-methionine + phosphate + diphosphate. The protein operates within amino-acid biosynthesis; S-adenosyl-L-methionine biosynthesis; S-adenosyl-L-methionine from L-methionine: step 1/1. Its function is as follows. Catalyzes the formation of S-adenosylmethionine from methionine and ATP. The reaction comprises two steps that are both catalyzed by the same enzyme: formation of S-adenosylmethionine (AdoMet) and triphosphate, and subsequent hydrolysis of the triphosphate. May be involved in the synthesis of betain in response to abiotic stress such as high salinity. The protein is S-adenosylmethionine synthase 4 (SAMS4) of Atriplex nummularia (Old man saltbush).